A 343-amino-acid chain; its full sequence is N-acetylornithine carbamoyltransferase (343 aa).

Residues 49–52 (SMRT), tryptophan 77, and arginine 112 contribute to the carbamoyl phosphate site. A N(2)-acetyl-L-ornithine-binding site is contributed by glutamate 144. 148–151 (HPCQ) contacts carbamoyl phosphate. Lysine 252 and leucine 295 together coordinate N(2)-acetyl-L-ornithine. 294–295 (CL) is a carbamoyl phosphate binding site. An N6-carboxylysine modification is found at lysine 302. Carbamoyl phosphate is bound at residue arginine 322.

The protein belongs to the aspartate/ornithine carbamoyltransferase superfamily. AOTCase family. In terms of assembly, homotrimer.

Its subcellular location is the cytoplasm. It carries out the reaction N(2)-acetyl-L-ornithine + carbamoyl phosphate = N(2)-acetyl-L-citrulline + phosphate + H(+). The protein operates within amino-acid biosynthesis; L-arginine biosynthesis. Its activity is regulated as follows. Carboxylation at Lys-302 increases the catalytic activity of the enzyme. Functionally, catalyzes the transfer of the carbamoyl group from carbamoyl phosphate to the delta-amino group of N(2)-acetyl-L-ornithine to produce N(2)-acetyl-L-citrulline. This is a step in an alternative arginine biosynthesis pathway. The enzyme has no activity with ornithine. The sequence is that of N-acetylornithine carbamoyltransferase from Xanthomonas axonopodis pv. citri (strain 306).